Reading from the N-terminus, the 119-residue chain is Large ribosomal subunit protein bL20 (119 aa).

The protein belongs to the bacterial ribosomal protein bL20 family.

Functionally, binds directly to 23S ribosomal RNA and is necessary for the in vitro assembly process of the 50S ribosomal subunit. It is not involved in the protein synthesizing functions of that subunit. The chain is Large ribosomal subunit protein bL20 from Vesicomyosocius okutanii subsp. Calyptogena okutanii (strain HA).